The chain runs to 250 residues: MSGHSKWSTIKRKKGAMDAKRGALFAKLSRAITVAAREGGGDPEANPALALAVQKAKDANMPNDNIQRAIDRGTGAGSEAGDYEHITYEGYAPGGVAVMVEVLTDNRNRAASDIRYIFSKHGGKLGTSGSVAYLFERKGVVLVPADAVGEEELMEAALEAGAEDVELDGDHWRVTTEPSEFMAVRQGLEEAGIRYESAQLSMEPMNTVKLDASTARQTLRLIDALEENDDVQEVYANFDISEEVMAEVAG.

It belongs to the TACO1 family.

Its subcellular location is the cytoplasm. The polypeptide is Probable transcriptional regulatory protein Rxyl_1318 (Rubrobacter xylanophilus (strain DSM 9941 / JCM 11954 / NBRC 16129 / PRD-1)).